The primary structure comprises 505 residues: Cytochrome c oxidase subunit 1 (505 aa).

The chain crosses the membrane as a helical span at residues 14–34 (LLYLVFAFFGGLLGTSLSMLI). The Ca(2+) site is built by glutamate 37 and glycine 42. 6 consecutive transmembrane segments (helical) span residues 55–75 (VIIT…ALFG), 98–118 (NISF…TLVE), 143–163 (AILS…NMLV), 180–200 (LFVW…PVLA), 229–249 (LFWF…FGIV), and 261–281 (VFGL…GFIV). Residue histidine 60 participates in Fe(II)-heme a binding. Cu cation contacts are provided by histidine 235 and tyrosine 239. The segment at residues 235–239 (HPEVY) is a cross-link (1'-histidyl-3'-tyrosine (His-Tyr)). Tyrosine 239 is a binding site for O2. 2 residues coordinate Cu cation: histidine 284 and histidine 285. Transmembrane regions (helical) follow at residues 302 to 322 (ATMI…ATIY) and 332 to 352 (MWFA…GVVL). Mg(2+) contacts are provided by histidine 362 and aspartate 363. Residue histidine 370 coordinates heme a3. A Fe(II)-heme a-binding site is contributed by histidine 372. Transmembrane regions (helical) follow at residues 374-394 (VLSM…GNLI), 408-428 (FWLL…LGLA), and 446-466 (AVSS…ATTF).

This sequence belongs to the heme-copper respiratory oxidase family. Component of the cytochrome c oxidase (complex IV, CIV), a multisubunit enzyme composed of a catalytic core of 3 subunits and several supernumerary subunits. The complex exists as a monomer or a dimer and forms supercomplexes (SCs) in the inner mitochondrial membrane with ubiquinol-cytochrome c oxidoreductase (cytochrome b-c1 complex, complex III, CIII). Heme serves as cofactor. Cu cation is required as a cofactor.

The protein resides in the mitochondrion inner membrane. It carries out the reaction 4 Fe(II)-[cytochrome c] + O2 + 8 H(+)(in) = 4 Fe(III)-[cytochrome c] + 2 H2O + 4 H(+)(out). Its pathway is energy metabolism; oxidative phosphorylation. Its function is as follows. Component of the cytochrome c oxidase, the last enzyme in the mitochondrial electron transport chain which drives oxidative phosphorylation. The respiratory chain contains 3 multisubunit complexes succinate dehydrogenase (complex II, CII), ubiquinol-cytochrome c oxidoreductase (cytochrome b-c1 complex, complex III, CIII) and cytochrome c oxidase (complex IV, CIV), that cooperate to transfer electrons derived from NADH and succinate to molecular oxygen, creating an electrochemical gradient over the inner membrane that drives transmembrane transport and the ATP synthase. Cytochrome c oxidase is the component of the respiratory chain that catalyzes the reduction of oxygen to water. Electrons originating from reduced cytochrome c in the intermembrane space (IMS) are transferred via the dinuclear copper A center (CU(A)) of subunit 2 and heme A of subunit 1 to the active site in subunit 1, a binuclear center (BNC) formed by heme A3 and copper B (CU(B)). The BNC reduces molecular oxygen to 2 water molecules using 4 electrons from cytochrome c in the IMS and 4 protons from the mitochondrial matrix. The sequence is that of Cytochrome c oxidase subunit 1 (COX1) from Chlamydomonas reinhardtii (Chlamydomonas smithii).